We begin with the raw amino-acid sequence, 240 residues long: Dihydromonapterin reductase (240 aa).

Tyr-152 acts as the Proton acceptor in catalysis.

The protein belongs to the short-chain dehydrogenases/reductases (SDR) family. FolM subfamily.

It carries out the reaction (6S)-5,6,7,8-tetrahydrofolate + NADP(+) = 7,8-dihydrofolate + NADPH + H(+). The catalysed reaction is 7,8-dihydromonapterin + NADPH + H(+) = 5,6,7,8-tetrahydromonapterin + NADP(+). Its function is as follows. Catalyzes the reduction of dihydromonapterin to tetrahydromonapterin. Also has lower activity with dihydrofolate. This is Dihydromonapterin reductase (folM) from Shigella sonnei (strain Ss046).